A 93-amino-acid chain; its full sequence is Neutrophil cationic peptide 1 type A (93 aa).

The signal sequence occupies residues 1–19 (MRTVPLFAACLLLTLMAQA). Residues 20–62 (EPLPRAADHSDTKMKGDREDHVAVISFWEEESTSLEDAGAGAG) constitute a propeptide that is removed on maturation. Intrachain disulfides connect C65–C93, C67–C82, and C72–C92.

The protein belongs to the alpha-defensin family.

It localises to the secreted. Has antibiotic, anti-fungi and antiviral activity. The protein is Neutrophil cationic peptide 1 type A of Cavia porcellus (Guinea pig).